The chain runs to 156 residues: Small ribosomal subunit protein uS7 (156 aa).

The protein belongs to the universal ribosomal protein uS7 family. In terms of assembly, part of the 30S ribosomal subunit. Contacts proteins S9 and S11.

One of the primary rRNA binding proteins, it binds directly to 16S rRNA where it nucleates assembly of the head domain of the 30S subunit. Is located at the subunit interface close to the decoding center, probably blocks exit of the E-site tRNA. In Acinetobacter baylyi (strain ATCC 33305 / BD413 / ADP1), this protein is Small ribosomal subunit protein uS7.